A 98-amino-acid polypeptide reads, in one-letter code: Integration host factor subunit alpha (98 aa).

The interval 51–71 (NFDLRDKNERPGRNPKTGEDI) is disordered. Residues 53–69 (DLRDKNERPGRNPKTGE) are compositionally biased toward basic and acidic residues.

Belongs to the bacterial histone-like protein family. Heterodimer of an alpha and a beta chain.

Its function is as follows. This protein is one of the two subunits of integration host factor, a specific DNA-binding protein that functions in genetic recombination as well as in transcriptional and translational control. In Vibrio parahaemolyticus serotype O3:K6 (strain RIMD 2210633), this protein is Integration host factor subunit alpha.